A 214-amino-acid polypeptide reads, in one-letter code: Anti-sigma-F factor NrsF (214 aa).

Residues 1 to 25 lie on the Cytoplasmic side of the membrane; sequence MRTDDLIDALAADAGRGTEPAPPRR. Residues 26 to 46 traverse the membrane as a helical segment; sequence LALVAGLGGVAALLLVLGWLQ. Topologically, residues 47–53 are periplasmic; the sequence is ARPDLGQ. Residues 54-74 traverse the membrane as a helical segment; it reads AILGPMFWVKAIYTGLLGLAG. The Cytoplasmic segment spans residues 75–90; it reads YLAVERLSRPGGSGRR. A helical membrane pass occupies residues 91–111; the sequence is GWIIGAVVFGACAVAGIYQAI. Residues 112–134 lie on the Periplasmic side of the membrane; the sequence is TSPDVQAALKLLHGYSWRSCSPR. The chain crosses the membrane as a helical span at residues 135–155; it reads ILVLGLPMLALGLWALRGMAP. Topologically, residues 156–158 are cytoplasmic; it reads TRP. The helical transmembrane segment at 159–179 threads the bilayer; sequence GLAGFAMGLFSGGVVATLYGL. At 180-185 the chain is on the periplasmic side; sequence HCPEHT. Residues 186–206 traverse the membrane as a helical segment; sequence FTFLALWYSLGVLALGLIGGW. Topologically, residues 207 to 214 are cytoplasmic; that stretch reads AGRWLLRW.

The protein belongs to the NrsF anti-sigma-F factor family.

It is found in the cell inner membrane. An anti-sigma factor for extracytoplasmic function (ECF) sigma factor sigma-F (SigF), which responds to chromate and cadmium. Overexpression leads to loss of response to dichromate. ECF sigma factors are held in an inactive form by a cognate anti-sigma factor. This chain is Anti-sigma-F factor NrsF, found in Caulobacter vibrioides (strain NA1000 / CB15N) (Caulobacter crescentus).